The sequence spans 203 residues: Small ribosomal subunit protein uS4 (203 aa).

The 64-residue stretch at 93-156 (RRLDNVVYRL…IKVPAILEAV (64 aa)) folds into the S4 RNA-binding domain.

Belongs to the universal ribosomal protein uS4 family. Part of the 30S ribosomal subunit. Contacts protein S5. The interaction surface between S4 and S5 is involved in control of translational fidelity.

One of the primary rRNA binding proteins, it binds directly to 16S rRNA where it nucleates assembly of the body of the 30S subunit. Functionally, with S5 and S12 plays an important role in translational accuracy. The sequence is that of Small ribosomal subunit protein uS4 from Streptococcus suis (strain 98HAH33).